A 394-amino-acid polypeptide reads, in one-letter code: Phosphoglycerate kinase (394 aa).

Substrate contacts are provided by residues 21–23 (DFN), Arg37, 60–63 (HLGR), Arg119, and Arg152. ATP-binding positions include Lys202, Glu324, and 350-353 (GGDS).

This sequence belongs to the phosphoglycerate kinase family. In terms of assembly, monomer.

The protein localises to the cytoplasm. The enzyme catalyses (2R)-3-phosphoglycerate + ATP = (2R)-3-phospho-glyceroyl phosphate + ADP. It functions in the pathway carbohydrate degradation; glycolysis; pyruvate from D-glyceraldehyde 3-phosphate: step 2/5. The sequence is that of Phosphoglycerate kinase from Carboxydothermus hydrogenoformans (strain ATCC BAA-161 / DSM 6008 / Z-2901).